The primary structure comprises 320 residues: 4-hydroxy-3-methylbut-2-enyl diphosphate reductase (320 aa).

A [4Fe-4S] cluster-binding site is contributed by Cys-12. Residues His-41 and His-74 each contribute to the (2E)-4-hydroxy-3-methylbut-2-enyl diphosphate site. The dimethylallyl diphosphate site is built by His-41 and His-74. The isopentenyl diphosphate site is built by His-41 and His-74. Cys-96 lines the [4Fe-4S] cluster pocket. Position 124 (His-124) interacts with (2E)-4-hydroxy-3-methylbut-2-enyl diphosphate. His-124 contacts dimethylallyl diphosphate. His-124 lines the isopentenyl diphosphate pocket. Glu-126 (proton donor) is an active-site residue. Thr-167 is a (2E)-4-hydroxy-3-methylbut-2-enyl diphosphate binding site. Cys-197 provides a ligand contact to [4Fe-4S] cluster. (2E)-4-hydroxy-3-methylbut-2-enyl diphosphate is bound by residues Ser-225, Ser-226, Asn-227, and Ser-269. 4 residues coordinate dimethylallyl diphosphate: Ser-225, Ser-226, Asn-227, and Ser-269. Isopentenyl diphosphate-binding residues include Ser-225, Ser-226, Asn-227, and Ser-269.

The protein belongs to the IspH family. It depends on [4Fe-4S] cluster as a cofactor.

The enzyme catalyses isopentenyl diphosphate + 2 oxidized [2Fe-2S]-[ferredoxin] + H2O = (2E)-4-hydroxy-3-methylbut-2-enyl diphosphate + 2 reduced [2Fe-2S]-[ferredoxin] + 2 H(+). It carries out the reaction dimethylallyl diphosphate + 2 oxidized [2Fe-2S]-[ferredoxin] + H2O = (2E)-4-hydroxy-3-methylbut-2-enyl diphosphate + 2 reduced [2Fe-2S]-[ferredoxin] + 2 H(+). It participates in isoprenoid biosynthesis; dimethylallyl diphosphate biosynthesis; dimethylallyl diphosphate from (2E)-4-hydroxy-3-methylbutenyl diphosphate: step 1/1. It functions in the pathway isoprenoid biosynthesis; isopentenyl diphosphate biosynthesis via DXP pathway; isopentenyl diphosphate from 1-deoxy-D-xylulose 5-phosphate: step 6/6. Functionally, catalyzes the conversion of 1-hydroxy-2-methyl-2-(E)-butenyl 4-diphosphate (HMBPP) into a mixture of isopentenyl diphosphate (IPP) and dimethylallyl diphosphate (DMAPP). Acts in the terminal step of the DOXP/MEP pathway for isoprenoid precursor biosynthesis. The polypeptide is 4-hydroxy-3-methylbut-2-enyl diphosphate reductase (Francisella tularensis subsp. novicida (strain U112)).